Reading from the N-terminus, the 148-residue chain is Phosphoribosyl-AMP cyclohydrolase (148 aa).

Residue Asp91 coordinates Mg(2+). A Zn(2+)-binding site is contributed by Cys92. Asp93 and Asp95 together coordinate Mg(2+). 2 residues coordinate Zn(2+): Cys109 and Cys116.

This sequence belongs to the PRA-CH family. In terms of assembly, homodimer. Requires Mg(2+) as cofactor. Zn(2+) is required as a cofactor.

Its subcellular location is the cytoplasm. It catalyses the reaction 1-(5-phospho-beta-D-ribosyl)-5'-AMP + H2O = 1-(5-phospho-beta-D-ribosyl)-5-[(5-phospho-beta-D-ribosylamino)methylideneamino]imidazole-4-carboxamide. The protein operates within amino-acid biosynthesis; L-histidine biosynthesis; L-histidine from 5-phospho-alpha-D-ribose 1-diphosphate: step 3/9. Functionally, catalyzes the hydrolysis of the adenine ring of phosphoribosyl-AMP. This is Phosphoribosyl-AMP cyclohydrolase from Rhodopseudomonas palustris (strain HaA2).